We begin with the raw amino-acid sequence, 220 residues long: Deoxyribose-phosphate aldolase (220 aa).

Asp-89 serves as the catalytic Proton donor/acceptor. Lys-151 functions as the Schiff-base intermediate with acetaldehyde in the catalytic mechanism. Residue Lys-180 is the Proton donor/acceptor of the active site.

Belongs to the DeoC/FbaB aldolase family. DeoC type 1 subfamily.

It localises to the cytoplasm. It carries out the reaction 2-deoxy-D-ribose 5-phosphate = D-glyceraldehyde 3-phosphate + acetaldehyde. The protein operates within carbohydrate degradation; 2-deoxy-D-ribose 1-phosphate degradation; D-glyceraldehyde 3-phosphate and acetaldehyde from 2-deoxy-alpha-D-ribose 1-phosphate: step 2/2. In terms of biological role, catalyzes a reversible aldol reaction between acetaldehyde and D-glyceraldehyde 3-phosphate to generate 2-deoxy-D-ribose 5-phosphate. In Streptococcus pneumoniae serotype 4 (strain ATCC BAA-334 / TIGR4), this protein is Deoxyribose-phosphate aldolase.